Here is a 1713-residue protein sequence, read N- to C-terminus: Serine/threonine-protein kinase MRCK beta (1713 aa).

A Protein kinase domain is found at 76–342; sequence FEIIKVIGRG…IEDFKKHAFF (267 aa). Residues 82-90 and Lys-105 contribute to the ATP site; that span reads IGRGAFGEV. The active-site Proton acceptor is Asp-200. A phosphoserine; by autocatalysis mark is found at Ser-221 and Ser-233. A Phosphothreonine; by autocatalysis modification is found at Thr-239. The 71-residue stretch at 343–413 folds into the AGC-kinase C-terminal domain; the sequence is EGLNWENIRN…TTESCFSDRG (71 aa). Residue Thr-423 is modified to Phosphothreonine. A coiled-coil region spans residues 434–649; it reads LENSLQIEAY…ASKERKLREH (216 aa). Arg-671 bears the Omega-N-methylarginine mark. Coiled coils occupy residues 681-815 and 878-939; these read QEIS…AHWE and ELQS…FRAD. Position 927 is a phosphoserine (Ser-927). At Tyr-954 the chain carries Phosphotyrosine. Over residues 971–994 the composition is skewed to polar residues; that stretch reads ASDQETQASKMDLSPSVSVATSTE. The interval 971–1022 is disordered; it reads ASDQETQASKMDLSPSVSVATSTEQQEDMARPQQRPSPVPLPSTQALAMAGP. The Phorbol-ester/DAG-type zinc finger occupies 1026 to 1076; it reads AHQFSIKSFPSPTQCSHCTSLMVGLIRQGYACEVCAFSCHVSCKDSAPQVC. The PH domain occupies 1096-1215; that stretch reads GTAYKGYVKV…WVGILEGLQA (120 aa). In terms of domain architecture, CNH spans 1241-1515; sequence IKAVLAAAIV…RPLNSDGSLN (275 aa). In terms of domain architecture, CRIB spans 1585 to 1598; sequence ISNPTNFNHVAHMG. The disordered stretch occupies residues 1616-1713; sequence TVQEEKQGPT…EGLDQPSCDA (98 aa). Residues 1666-1677 show a composition bias toward basic and acidic residues; sequence DFDKEPDSDSTK. Ser-1682, Ser-1684, Ser-1688, Ser-1692, and Ser-1695 each carry phosphoserine.

This sequence belongs to the protein kinase superfamily. AGC Ser/Thr protein kinase family. DMPK subfamily. In terms of assembly, homodimer and homotetramer via the coiled coil regions. Interacts tightly with GTP-bound but not GDP-bound CDC42. Interacts with TJP1; this interaction requires the presence of catalytically active CDC42. Forms a tripartite complex with MYO18A and LURAP1 with the latter acting as an adapter connecting CDC42BPB and MYO18A. LURAP1 binding results in activation of CDC42BPB by abolition of its negative autoregulation. Interacts with STRIP1, STRN3 and SIKE1. Interacts with CPNE4 (via VWFA domain). Interacts with LURAP1. Interacts (via AGC-kinase C-terminal domain) with FAM89B/LRAP25 (via LRR repeat). Forms a tripartite complex with FAM89B/LRAP25 and LIMK1. Requires Mg(2+) as cofactor. Post-translationally, proteolytically cleaved by caspases upon apoptosis induction.

Its subcellular location is the cytoplasm. It is found in the cell membrane. The protein localises to the cell junction. The protein resides in the cell projection. It localises to the lamellipodium. The catalysed reaction is L-seryl-[protein] + ATP = O-phospho-L-seryl-[protein] + ADP + H(+). It catalyses the reaction L-threonyl-[protein] + ATP = O-phospho-L-threonyl-[protein] + ADP + H(+). Its activity is regulated as follows. Maintained in an inactive, closed conformation by an interaction between the kinase domain and the negative autoregulatory C-terminal coiled-coil region. Agonist binding to the phorbol ester binding site disrupts this, releasing the kinase domain to allow N-terminus-mediated dimerization and kinase activation by transautophosphorylation. Inhibited by chelerythrine chloride. Its function is as follows. Serine/threonine-protein kinase which is an important downstream effector of CDC42 and plays a role in the regulation of cytoskeleton reorganization and cell migration. Regulates actin cytoskeletal reorganization via phosphorylation of PPP1R12C and MYL9/MLC2. In concert with MYO18A and LURAP1, is involved in modulating lamellar actomyosin retrograde flow that is crucial to cell protrusion and migration. Phosphorylates PPP1R12A. In concert with FAM89B/LRAP25 mediates the targeting of LIMK1 to the lamellipodium resulting in its activation and subsequent phosphorylation of CFL1 which is important for lamellipodial F-actin regulation. This chain is Serine/threonine-protein kinase MRCK beta, found in Mus musculus (Mouse).